A 174-amino-acid chain; its full sequence is Chorismate pyruvate-lyase (174 aa).

4 residues coordinate substrate: M36, R78, L116, and E157.

Belongs to the UbiC family. Monomer.

The protein localises to the cytoplasm. It carries out the reaction chorismate = 4-hydroxybenzoate + pyruvate. The protein operates within cofactor biosynthesis; ubiquinone biosynthesis. In terms of biological role, removes the pyruvyl group from chorismate, with concomitant aromatization of the ring, to provide 4-hydroxybenzoate (4HB) for the ubiquinone pathway. The protein is Chorismate pyruvate-lyase of Yersinia pestis bv. Antiqua (strain Angola).